We begin with the raw amino-acid sequence, 464 residues long: tRNA modification GTPase MnmE (464 aa).

(6S)-5-formyl-5,6,7,8-tetrahydrofolate-binding residues include Arg-27, Glu-90, and Lys-129. Residues 222–384 form the TrmE-type G domain; that stretch reads GVTLVLAGSV…LYDRIRSFIA (163 aa). Residues 232–237, 251–257, and 276–279 each bind GTP; these read NVGKSS, SSYAGTT, and DTAG. A Mg(2+)-binding site is contributed by Ser-236. Ser-251 lines the K(+) pocket. A Mg(2+)-binding site is contributed by Thr-257. Lys-464 contributes to the (6S)-5-formyl-5,6,7,8-tetrahydrofolate binding site.

This sequence belongs to the TRAFAC class TrmE-Era-EngA-EngB-Septin-like GTPase superfamily. TrmE GTPase family. As to quaternary structure, homodimer. Heterotetramer of two MnmE and two MnmG subunits. It depends on K(+) as a cofactor.

The protein localises to the cytoplasm. Exhibits a very high intrinsic GTPase hydrolysis rate. Involved in the addition of a carboxymethylaminomethyl (cmnm) group at the wobble position (U34) of certain tRNAs, forming tRNA-cmnm(5)s(2)U34. This chain is tRNA modification GTPase MnmE, found in Borrelia recurrentis (strain A1).